A 183-amino-acid chain; its full sequence is ATP synthase subunit delta (183 aa).

The protein belongs to the ATPase delta chain family. In terms of assembly, F-type ATPases have 2 components, F(1) - the catalytic core - and F(0) - the membrane proton channel. F(1) has five subunits: alpha(3), beta(3), gamma(1), delta(1), epsilon(1). F(0) has three main subunits: a(1), b(2) and c(10-14). The alpha and beta chains form an alternating ring which encloses part of the gamma chain. F(1) is attached to F(0) by a central stalk formed by the gamma and epsilon chains, while a peripheral stalk is formed by the delta and b chains.

It localises to the cell inner membrane. Its function is as follows. F(1)F(0) ATP synthase produces ATP from ADP in the presence of a proton or sodium gradient. F-type ATPases consist of two structural domains, F(1) containing the extramembraneous catalytic core and F(0) containing the membrane proton channel, linked together by a central stalk and a peripheral stalk. During catalysis, ATP synthesis in the catalytic domain of F(1) is coupled via a rotary mechanism of the central stalk subunits to proton translocation. Functionally, this protein is part of the stalk that links CF(0) to CF(1). It either transmits conformational changes from CF(0) to CF(1) or is implicated in proton conduction. The polypeptide is ATP synthase subunit delta (Desulfovibrio desulfuricans (strain ATCC 27774 / DSM 6949 / MB)).